The primary structure comprises 938 residues: LPS-assembly protein LptD (938 aa).

An N-terminal signal peptide occupies residues 1–33 (MAVKHPAFRKKFPLLVTGSLLALQPAFSLQSFA). Residues 52-96 (KTATSALPPRPQHSRSAVSTTSGSATATATKQEPAPVLVTESKGR) form a disordered region. Residues 65–81 (SRSAVSTTSGSATATAT) are compositionally biased toward low complexity.

This sequence belongs to the LptD family. Component of the lipopolysaccharide transport and assembly complex. Interacts with LptE and LptA.

The protein localises to the cell outer membrane. Together with LptE, is involved in the assembly of lipopolysaccharide (LPS) at the surface of the outer membrane. The sequence is that of LPS-assembly protein LptD from Ectopseudomonas mendocina (strain ymp) (Pseudomonas mendocina).